The following is a 565-amino-acid chain: Oxygen-dependent choline dehydrogenase (565 aa).

6–35 (DYIIVGAGSAGNTLATRLTEDASVSVLLLE) contacts FAD. The tract at residues 182–203 (QQEGFGPMDRSVTKKGRRSSTA) is disordered. The active-site Proton acceptor is histidine 475.

This sequence belongs to the GMC oxidoreductase family. Requires FAD as cofactor.

The enzyme catalyses choline + A = betaine aldehyde + AH2. It catalyses the reaction betaine aldehyde + NAD(+) + H2O = glycine betaine + NADH + 2 H(+). Its pathway is amine and polyamine biosynthesis; betaine biosynthesis via choline pathway; betaine aldehyde from choline (cytochrome c reductase route): step 1/1. Involved in the biosynthesis of the osmoprotectant glycine betaine. Catalyzes the oxidation of choline to betaine aldehyde and betaine aldehyde to glycine betaine at the same rate. The polypeptide is Oxygen-dependent choline dehydrogenase (Pseudomonas entomophila (strain L48)).